The sequence spans 1445 residues: DNA-directed RNA polymerase subunit beta'' (1445 aa).

Residues C220, C293, C300, and C303 each contribute to the Zn(2+) site.

The protein belongs to the RNA polymerase beta' chain family. RpoC2 subfamily. In plastids the minimal PEP RNA polymerase catalytic core is composed of four subunits: alpha, beta, beta', and beta''. When a (nuclear-encoded) sigma factor is associated with the core the holoenzyme is formed, which can initiate transcription. It depends on Zn(2+) as a cofactor.

It localises to the plastid. The protein resides in the chloroplast. The catalysed reaction is RNA(n) + a ribonucleoside 5'-triphosphate = RNA(n+1) + diphosphate. In terms of biological role, DNA-dependent RNA polymerase catalyzes the transcription of DNA into RNA using the four ribonucleoside triphosphates as substrates. The sequence is that of DNA-directed RNA polymerase subunit beta'' from Anthoceros angustus (Hornwort).